The primary structure comprises 107 residues: Defensin-like protein 242 (107 aa).

Positions 1–22 are cleaved as a signal peptide; sequence MKVVAIFLASCVLFSLIPTHLS. Disulfide bonds link Cys45/Cys100, Cys55/Cys84, Cys65/Cys94, and Cys82/Cys96.

Belongs to the DEFL family.

It is found in the secreted. This Arabidopsis thaliana (Mouse-ear cress) protein is Defensin-like protein 242 (SCRL10).